The following is a 377-amino-acid chain: Succinyl-diaminopimelate desuccinylase (377 aa).

Zn(2+) is bound at residue histidine 66. Aspartate 68 is an active-site residue. Residue aspartate 99 coordinates Zn(2+). Catalysis depends on glutamate 133, which acts as the Proton acceptor. The Zn(2+) site is built by glutamate 134, glutamate 162, and histidine 348.

This sequence belongs to the peptidase M20A family. DapE subfamily. In terms of assembly, homodimer. Requires Zn(2+) as cofactor. The cofactor is Co(2+).

It carries out the reaction N-succinyl-(2S,6S)-2,6-diaminopimelate + H2O = (2S,6S)-2,6-diaminopimelate + succinate. The protein operates within amino-acid biosynthesis; L-lysine biosynthesis via DAP pathway; LL-2,6-diaminopimelate from (S)-tetrahydrodipicolinate (succinylase route): step 3/3. In terms of biological role, catalyzes the hydrolysis of N-succinyl-L,L-diaminopimelic acid (SDAP), forming succinate and LL-2,6-diaminopimelate (DAP), an intermediate involved in the bacterial biosynthesis of lysine and meso-diaminopimelic acid, an essential component of bacterial cell walls. The chain is Succinyl-diaminopimelate desuccinylase from Xylella fastidiosa (strain M23).